The chain runs to 338 residues: Glycerol-3-phosphate dehydrogenase [NAD(P)+] (338 aa).

NADPH is bound by residues S13, W14, and K108. K108, G139, and S141 together coordinate sn-glycerol 3-phosphate. A143 provides a ligand contact to NADPH. Positions 194, 247, 257, 258, and 259 each coordinate sn-glycerol 3-phosphate. Residue K194 is the Proton acceptor of the active site. R258 provides a ligand contact to NADPH. The NADPH site is built by V282 and E284.

It belongs to the NAD-dependent glycerol-3-phosphate dehydrogenase family.

The protein resides in the cytoplasm. It carries out the reaction sn-glycerol 3-phosphate + NAD(+) = dihydroxyacetone phosphate + NADH + H(+). The enzyme catalyses sn-glycerol 3-phosphate + NADP(+) = dihydroxyacetone phosphate + NADPH + H(+). It functions in the pathway membrane lipid metabolism; glycerophospholipid metabolism. Functionally, catalyzes the reduction of the glycolytic intermediate dihydroxyacetone phosphate (DHAP) to sn-glycerol 3-phosphate (G3P), the key precursor for phospholipid synthesis. This is Glycerol-3-phosphate dehydrogenase [NAD(P)+] from Streptococcus pneumoniae (strain Hungary19A-6).